Consider the following 209-residue polypeptide: Uracil phosphoribosyltransferase (209 aa).

5-phospho-alpha-D-ribose 1-diphosphate contacts are provided by residues arginine 79, arginine 104, and 131-139 (DPMLATGGS). Uracil contacts are provided by residues isoleucine 194 and 199 to 201 (GDA). Aspartate 200 provides a ligand contact to 5-phospho-alpha-D-ribose 1-diphosphate.

The protein belongs to the UPRTase family. Mg(2+) is required as a cofactor.

It catalyses the reaction UMP + diphosphate = 5-phospho-alpha-D-ribose 1-diphosphate + uracil. Its pathway is pyrimidine metabolism; UMP biosynthesis via salvage pathway; UMP from uracil: step 1/1. Its activity is regulated as follows. Allosterically activated by GTP. Functionally, catalyzes the conversion of uracil and 5-phospho-alpha-D-ribose 1-diphosphate (PRPP) to UMP and diphosphate. In Geobacter sp. (strain M21), this protein is Uracil phosphoribosyltransferase.